Here is a 239-residue protein sequence, read N- to C-terminus: tRNA (guanine-N(7)-)-methyltransferase (239 aa).

E69, E94, D121, and D144 together coordinate S-adenosyl-L-methionine. The active site involves D144. K148 serves as a coordination point for substrate. Positions 150-155 are interaction with RNA; it reads RHNKRR. Residues D180 and 217 to 220 each bind substrate; that span reads TKFE.

The protein belongs to the class I-like SAM-binding methyltransferase superfamily. TrmB family. Monomer.

It catalyses the reaction guanosine(46) in tRNA + S-adenosyl-L-methionine = N(7)-methylguanosine(46) in tRNA + S-adenosyl-L-homocysteine. It participates in tRNA modification; N(7)-methylguanine-tRNA biosynthesis. Functionally, catalyzes the formation of N(7)-methylguanine at position 46 (m7G46) in tRNA. The chain is tRNA (guanine-N(7)-)-methyltransferase from Salmonella choleraesuis (strain SC-B67).